A 656-amino-acid polypeptide reads, in one-letter code: MADNLPTEFDVVIIGTGLPESILAAACSRSGQRVLHIDSRSYYGGNWASFSFSGLLSWLKEYQQNNDIGEESTVVWQDLIHETEEAITLRKKDETIQHTEAFCYASQDMEDNVEEIGALQKNPSLGVSNTFTEVLDSALPEESQLSYFNSDEMPAKHTQKSDTEISLEVTDVEESVEKEKYCGDKTCMHTVSDKDGDKDESKSTVEDKADEPIRNRITYSQIVKEGRRFNIDLVSKLLYSQGLLIDLLIKSDVSRYVEFKNVTRILAFREGKVEQVPCSRADVFNSKELTMVEKRMLMKFLTFCLEYEQHPDEYQAFRQCSFSEYLKTKKLTPNLQHFVLHSIAMTSESSCTTIDGLNATKNFLQCLGRFGNTPFLFPLYGQGEIPQGFCRMCAVFGGIYCLRHKVQCFVVDKESGRCKAIIDHFGQRINAKYFIVEDSYLSEETCSNVQYKQISRAVLITDQSILKTDLDQQTSILIVPPAEPGACAVRVTELCSSTMTCMKDTYLVHLTCSSSKTAREDLESVVKKLFTPYTETEINEEELTKPRLLWALYFNMRDSSGISRSSYNGLPSNVYVCSGPDCGLGNEHAVKQAETLFQEIFPTEEFCPPPPNPEDIIFDGDDKQPEAPGTNNVVMAKLESSEESKNLESPEKHLQN.

Disordered regions lie at residues 188–209 and 609–656; these read MHTV…EDKA and PPPN…HLQN. Basic and acidic residues predominate over residues 639–656; the sequence is ESSEESKNLESPEKHLQN. Serine 649 is modified (phosphoserine).

It belongs to the Rab GDI family. As to quaternary structure, monomer. Heterotrimer composed of RABGGTA, RABGGTB and CHML; within this trimer, RABGGTA and RABGGTB form the catalytic component B, while CHML (component A) mediates Rab protein binding. Interacts with RAB1A, RAB7A and RAB27A, but has much lower affinity for RAB1A, RAB7A and RAB27A than CHM. Interacts with the non-phosphorylated forms of RAB3A, RAB3B, RAB3C, RAB3D, RAB5B, RAB5C, RAB8A, RAB8B, RAB10, RAB12, RAB35, and RAB43.

The protein localises to the cytoplasm. It is found in the cytosol. In terms of biological role, substrate-binding subunit (component A) of the Rab geranylgeranyltransferase (GGTase) complex. Binds unprenylated Rab proteins and presents the substrate peptide to the catalytic component B. The component A is thought to be regenerated by transferring its prenylated Rab back to the donor membrane. Less effective than CHM in supporting prenylation of Rab3 family. The polypeptide is Rab proteins geranylgeranyltransferase component A 2 (CHML) (Homo sapiens (Human)).